Consider the following 276-residue polypeptide: MPSMSPSSISTEKSPPPSDTSMAIVAFDNSTTHLSSSPSPPHSLDHSSDSEKEDEKRRPESRRNKNPVKIEETPSPIVVVHNHNRSVKEVVPTRKTARVGSGRSSGQRSGAVLAILRRSRREEIVKFVALGFRLSEVVLALISFSIMAADKTKGWSGDSFDRYKEYRFCLSVNVVAFIYASFQACDLAYHLVKEKHLISHHLRPLFEFIIDQVLAYLLMCASTAAVTRVDDWVSNWGKDDFTEMASASIAMSFLTFLAFAFSSLISGYNLFNQDSL.

Residues 1-13 (MPSMSPSSISTEK) are compositionally biased toward polar residues. A disordered region spans residues 1 to 76 (MPSMSPSSIS…PVKIEETPSP (76 aa)). At 1–126 (MPSMSPSSIS…RRSRREEIVK (126 aa)) the chain is on the cytoplasmic side. The span at 43 to 72 (SLDHSSDSEKEDEKRRPESRRNKNPVKIEE) shows a compositional bias: basic and acidic residues. A helical membrane pass occupies residues 127 to 147 (FVALGFRLSEVVLALISFSIM). At 148-167 (AADKTKGWSGDSFDRYKEYR) the chain is on the extracellular side. Residues 168 to 188 (FCLSVNVVAFIYASFQACDLA) form a helical membrane-spanning segment. Over 189-205 (YHLVKEKHLISHHLRPL) the chain is Cytoplasmic. The chain crosses the membrane as a helical span at residues 206-226 (FEFIIDQVLAYLLMCASTAAV). At 227–244 (TRVDDWVSNWGKDDFTEM) the chain is on the extracellular side. The chain crosses the membrane as a helical span at residues 245–265 (ASASIAMSFLTFLAFAFSSLI). The Cytoplasmic portion of the chain corresponds to 266 to 276 (SGYNLFNQDSL).

The protein belongs to the Casparian strip membrane proteins (CASP) family. Homodimer and heterodimers.

The protein resides in the cell membrane. The protein is CASP-like protein 4A3 of Arabidopsis lyrata subsp. lyrata (Lyre-leaved rock-cress).